An 875-amino-acid polypeptide reads, in one-letter code: MSKSTAEIRQAFLDFFHSKGHQVVSSSSLVPNNDPTLLFTNAGMNQFKDVFLGLDKRAYSRATTSQRCVRAGGKHNDLENVGYTARHHTFFEMLGNFSFGDYFKHDAINFAWELLTSEQWFNLPKEKLWVTVYETDDEAYNIWANEVGVPHERIIRIGDNKGGAFASDNFWQMGDTGPCGPCSEIFFDHGDHIWGGPPGSAEEDGDRYIEIWNIVFMQFNRQSDGTMLPLPKPSVDTGMGLERIAAVLQHVNSNYEIDLFRDLIAAVADVTGATDLSSKSLRVIADHIRSCAFLISDGVIPSNENRGYVLRRIIRRAIRHGNMLGAKETFFYKLVAPLIAVMGPAAAELKQQQAMVEQVLKTEEEQFARTLERGLALLDDELSKLTGDTLDGETAFRLYDTYGFPVDLTADVCRERNLKVDEAGFEQAMEAQRRRARESSGFGADYNSLIRVDSASQFSGYDHVQQHATVTALFRNGEAVDEIHAGEEAVVVLNRTPFYGESGGQVGDKGELKNATATFSVTDTQKYGQAIGHVGILTTGTLRVNHSVEALVDVVRRNRIRLNHSATHLLHAALRNVLGEHVAQKGSLVNDKYLRFDFSHFEAMKPEQIRLVEDLVNEQIRRNMPVQTEVMELDAAKEKGAMALFGEKYDDQVRVLTMGDFSTELCGGTHASRTGDIGLFRILTESGTAAGIRRIEAVTGEGAIALLHQQSDLLQDVAHLVKGDIHNLADKVRAVLDRSKMLERELQQLKDQQAAQESASLSSSAKLINGVKLLVSQLDNVEPKMLRTMVDDLKNQLGSAIIVLATTADDKVSLIVGVTKDLTGKVKAGELIADIAQQVGGKGGGRPDMAQAGGTDVQALPAALASVEAWVASRM.

Zn(2+) contacts are provided by His564, His568, Cys666, and His670.

The protein belongs to the class-II aminoacyl-tRNA synthetase family. In terms of assembly, homotetramer. The cofactor is Zn(2+).

The protein localises to the cytoplasm. The catalysed reaction is tRNA(Ala) + L-alanine + ATP = L-alanyl-tRNA(Ala) + AMP + diphosphate. Functionally, catalyzes the attachment of alanine to tRNA(Ala) in a two-step reaction: alanine is first activated by ATP to form Ala-AMP and then transferred to the acceptor end of tRNA(Ala). Also edits incorrectly charged Ser-tRNA(Ala) and Gly-tRNA(Ala) via its editing domain. This chain is Alanine--tRNA ligase, found in Yersinia pseudotuberculosis serotype IB (strain PB1/+).